We begin with the raw amino-acid sequence, 464 residues long: Protein FAM90A1 (464 aa).

5 disordered regions span residues 1–43, 71–294, 312–386, 412–437, and 445–464; these read MMAR…PRLK, PNFG…KRSA, PFQI…AASH, PSFH…SEGP, and VLYE…SDLE. Basic and acidic residues-rich tracts occupy residues 74–83 and 97–114; these read GEKEGKENLK and NKDK…DPQR. The span at 180–197 shows a compositional bias: low complexity; sequence LASLSPLRKASLSSSSSL. Over residues 344–355 the composition is skewed to polar residues; sequence TSPQTGTRTPAQ.

Belongs to the FAM90 family.

The protein is Protein FAM90A1 (FAM90A1) of Homo sapiens (Human).